A 37-amino-acid polypeptide reads, in one-letter code: Potassium channel toxin alpha-KTx 11.1 (37 aa).

3 disulfide bridges follow: Cys8-Cys27, Cys13-Cys33, and Cys17-Cys35.

The protein belongs to the short scorpion toxin superfamily. Potassium channel inhibitor family. Alpha-KTx 11 subfamily. Expressed by the venom gland.

The protein localises to the secreted. In terms of biological role, binds and inhibits voltage-sensitive potassium channels. Inhibits the vertebrate potassium channels Kv1.1/KCNA1, Kv1.2/KCNA2 and Kv1.3/KCNA3 with low affinity. Also weakly inhibits Kv7.1/KCNQ1 (10 uM of the toxin inhibits currents by 21.43%). This Parabuthus villosus (Black hairy thick-tailed scorpion) protein is Potassium channel toxin alpha-KTx 11.1.